The primary structure comprises 178 residues: MORN repeat-containing protein 5 (178 aa).

MORN repeat units lie at residues 8 to 30, 31 to 53, and 54 to 75; these read YDGDYNNGRMEGTGEYTIPTHTR, YVGEMKDGMFHGKGVLHFPNGSK, and YEGTWEKGICKEGKYTFSDGLK.

The protein resides in the cell projection. Its subcellular location is the cilium. It is found in the flagellum. This Danio rerio (Zebrafish) protein is MORN repeat-containing protein 5 (morn5).